A 72-amino-acid polypeptide reads, in one-letter code: SRY-related protein ADW2 (72 aa).

The segment at residues 1–69 (VKRPMNAFMV…KHMADYADYK (69 aa)) is a DNA-binding region (HMG box).

It localises to the nucleus. In Alligator mississippiensis (American alligator), this protein is SRY-related protein ADW2.